The chain runs to 414 residues: Serine hydroxymethyltransferase (414 aa).

(6S)-5,6,7,8-tetrahydrofolate-binding positions include Leu117 and 121–123; that span reads GHL. Lys226 is modified (N6-(pyridoxal phosphate)lysine). 349–351 contacts (6S)-5,6,7,8-tetrahydrofolate; the sequence is SPF.

It belongs to the SHMT family. In terms of assembly, homodimer. Requires pyridoxal 5'-phosphate as cofactor.

Its subcellular location is the cytoplasm. The catalysed reaction is (6R)-5,10-methylene-5,6,7,8-tetrahydrofolate + glycine + H2O = (6S)-5,6,7,8-tetrahydrofolate + L-serine. Its pathway is one-carbon metabolism; tetrahydrofolate interconversion. The protein operates within amino-acid biosynthesis; glycine biosynthesis; glycine from L-serine: step 1/1. Its function is as follows. Catalyzes the reversible interconversion of serine and glycine with tetrahydrofolate (THF) serving as the one-carbon carrier. Also exhibits THF-independent aldolase activity toward beta-hydroxyamino acids, producing glycine and aldehydes, via a retro-aldol mechanism. This is Serine hydroxymethyltransferase from Methanospirillum hungatei JF-1 (strain ATCC 27890 / DSM 864 / NBRC 100397 / JF-1).